A 495-amino-acid polypeptide reads, in one-letter code: Glutamyl-tRNA(Gln) amidotransferase subunit A (495 aa).

Residues Lys-78 and Ser-158 each act as charge relay system in the active site. Ser-182 acts as the Acyl-ester intermediate in catalysis.

Belongs to the amidase family. GatA subfamily. In terms of assembly, heterotrimer of A, B and C subunits.

It carries out the reaction L-glutamyl-tRNA(Gln) + L-glutamine + ATP + H2O = L-glutaminyl-tRNA(Gln) + L-glutamate + ADP + phosphate + H(+). Its function is as follows. Allows the formation of correctly charged Gln-tRNA(Gln) through the transamidation of misacylated Glu-tRNA(Gln) in organisms which lack glutaminyl-tRNA synthetase. The reaction takes place in the presence of glutamine and ATP through an activated gamma-phospho-Glu-tRNA(Gln). This Roseobacter denitrificans (strain ATCC 33942 / OCh 114) (Erythrobacter sp. (strain OCh 114)) protein is Glutamyl-tRNA(Gln) amidotransferase subunit A.